The primary structure comprises 417 residues: MDRREEEEEETGYGEKGTRNQSKEDESRLGKIFELIPLDMIPDILLRLPAKSAVRFRIVSKLWLSITTRPYFIRSFAFPSSTRLCLMACVKARDMRLFISLHQHDDGSYAHVDRCEIKSPKHDYYNPSSESVNGLVCFGDFYNIVVWNPSMRQHVTLPEPKPHSTVRYFIRSCLGYDPVEDKYKVLSISGYHNGNHDPLVFTLGPQESWRVIQNSPLDIPLPTGGSRVGTCINGHVYYEAQIRFKVDDIFNFENILMSFDVRYEKFNTIKKPADPTLRNFMLNYQGKLAWFCSDYSSIRFWVLDDGDKQEWSLKNFILPFPISPEIDPIFECRVMLTGVTHDTGEFIFINATMCDAFCVLYYDPKSGSERRIEYEGIGDREFCINTGILECKRFTIDWFPNHNESLMSLVNVLKKAD.

A compositionally biased stretch (acidic residues) spans 1–12 (MDRREEEEEETG). The disordered stretch occupies residues 1-25 (MDRREEEEEETGYGEKGTRNQSKED). The segment covering 16-25 (KGTRNQSKED) has biased composition (basic and acidic residues). The F-box domain occupies 30–76 (GKIFELIPLDMIPDILLRLPAKSAVRFRIVSKLWLSITTRPYFIRSF).

This Arabidopsis thaliana (Mouse-ear cress) protein is Putative F-box protein At4g21240.